The following is a 172-amino-acid chain: uncharacterized protein (172 aa).

Residues K3–N171 form the PfpI endopeptidase domain.

Belongs to the peptidase C56 family.

This is an uncharacterized protein from Staphylococcus saprophyticus subsp. saprophyticus (strain ATCC 15305 / DSM 20229 / NCIMB 8711 / NCTC 7292 / S-41).